Consider the following 603-residue polypeptide: Multicopper oxidase MCE (603 aa).

The N-terminal stretch at 1-21 is a signal peptide; it reads MNTFICSALICLSWLPGFIQA. One can recognise a Plastocyanin-like 1 domain in the interval 30–144; sequence ITYAKGAPDG…YGALWIRPKE (115 aa). N-linked (GlcNAc...) asparagine glycosylation is present at Asn75. Residues His79, His81, His123, and His125 each coordinate Cu cation. Asn155, Asn180, Asn235, Asn256, Asn272, Asn275, Asn388, Asn394, Asn413, and Asn455 each carry an N-linked (GlcNAc...) asparagine glycan. The region spanning 173–353 is the Plastocyanin-like 2 domain; sequence LIVSDWSNFT…TPGDYTIRLP (181 aa). The Plastocyanin-like 3 domain occupies 450–581; it reads LLYNPNSTAA…GGMAGVIMDG (132 aa). His495 is a binding site for Cu cation. Residues Asn512 and Asn595 are each glycosylated (N-linked (GlcNAc...) asparagine).

It belongs to the multicopper oxidase family.

It carries out the reaction 4 monapinone A + O2 = 2 dinapinone A + 2 H2O. The enzyme catalyses 4 monapinone E + O2 = 2 dinapinone E + 2 H2O. It functions in the pathway secondary metabolite biosynthesis. Its function is as follows. Multicopper oxidase; part of the gene cluster that mediates the biosynthesis of dinapinones DPA1 (or (M)-DPA) and DPA2 (or (P)-DPA), biaryl dihydronaphthopyranones that act in concert as inhibitors of triacylglycerol accumulation in mammalian cells. The first step in the pathway corresponds to the biosynthesis of dihydroxy-decanoyl-CoA by the fungal type I fatty acid synthase (formed by ORF4 and ORF5). The cluster-specific polyketide synthase (ORF7) then accepts and extends dihydroxy-decanoyl-CoA with 6 malonyl-CoA moieties and cyclizes the molecule to produce a putative polyhydroxynaphthopyranone intermediate, which is further methylated by the cluster-specific methyltransferase (ORF1) at 7-OH to produce monapinone A (MPA). MCE catalyzes the regioselective biaryl coupling of monapinone A (MPA) at the 8,8'-positions to afford dimeric atropisomers DPA1 and DPA2 in a ratio of approximately 1:2.5. Monapinone E (MPE) also appears to be a substrate for MCE and provides the atropisomers dinapinones DPE1 (or (M)-DPE) and DPE2 (or (P)-DPE). In Talaromyces pinophilus (Penicillium pinophilum), this protein is Multicopper oxidase MCE.